The primary structure comprises 115 residues: MKLSKKQARLRRATKFRAKHAQGSTKRLCVHKTAQHIYAQIISPCGTKVLASASTLTAKLKNGGNVDAATKVGKEIAKAATSVKVIKVAFDRSGFKYHGRVKALADAAREGGLDF.

It belongs to the universal ribosomal protein uL18 family. As to quaternary structure, part of the 50S ribosomal subunit; part of the 5S rRNA/L5/L18/L25 subcomplex. Contacts the 5S and 23S rRNAs.

This is one of the proteins that bind and probably mediate the attachment of the 5S RNA into the large ribosomal subunit, where it forms part of the central protuberance. The protein is Large ribosomal subunit protein uL18 of Ruthia magnifica subsp. Calyptogena magnifica.